The following is a 671-amino-acid chain: DNA ligase (671 aa).

NAD(+) contacts are provided by residues 32 to 36 (DAEYD), 81 to 82 (SL), and Glu-113. Lys-115 serves as the catalytic N6-AMP-lysine intermediate. Residues Arg-136, Glu-173, Lys-290, and Lys-314 each coordinate NAD(+). The Zn(2+) site is built by Cys-408, Cys-411, Cys-426, and Cys-432. The region spanning 593–671 (EIDSPFAGKT…EAEMLRLLGS (79 aa)) is the BRCT domain.

It belongs to the NAD-dependent DNA ligase family. LigA subfamily. Mg(2+) is required as a cofactor. It depends on Mn(2+) as a cofactor.

It carries out the reaction NAD(+) + (deoxyribonucleotide)n-3'-hydroxyl + 5'-phospho-(deoxyribonucleotide)m = (deoxyribonucleotide)n+m + AMP + beta-nicotinamide D-nucleotide.. Its function is as follows. DNA ligase that catalyzes the formation of phosphodiester linkages between 5'-phosphoryl and 3'-hydroxyl groups in double-stranded DNA using NAD as a coenzyme and as the energy source for the reaction. It is essential for DNA replication and repair of damaged DNA. The chain is DNA ligase from Shigella flexneri serotype 5b (strain 8401).